Here is a 304-residue protein sequence, read N- to C-terminus: UDP-N-acetylenolpyruvoylglucosamine reductase (304 aa).

In terms of domain architecture, FAD-binding PCMH-type spans 33–198; that stretch reads KVGGPVDILL…LRATFNLVNG (166 aa). The active site involves arginine 177. Serine 227 functions as the Proton donor in the catalytic mechanism. The active site involves glutamate 297.

Belongs to the MurB family. It depends on FAD as a cofactor.

It localises to the cytoplasm. It catalyses the reaction UDP-N-acetyl-alpha-D-muramate + NADP(+) = UDP-N-acetyl-3-O-(1-carboxyvinyl)-alpha-D-glucosamine + NADPH + H(+). It functions in the pathway cell wall biogenesis; peptidoglycan biosynthesis. Functionally, cell wall formation. In Clostridium beijerinckii (strain ATCC 51743 / NCIMB 8052) (Clostridium acetobutylicum), this protein is UDP-N-acetylenolpyruvoylglucosamine reductase.